The primary structure comprises 276 residues: 2-dehydro-3-deoxyphosphooctonate aldolase (276 aa).

The protein belongs to the KdsA family.

The protein localises to the cytoplasm. The catalysed reaction is D-arabinose 5-phosphate + phosphoenolpyruvate + H2O = 3-deoxy-alpha-D-manno-2-octulosonate-8-phosphate + phosphate. It participates in carbohydrate biosynthesis; 3-deoxy-D-manno-octulosonate biosynthesis; 3-deoxy-D-manno-octulosonate from D-ribulose 5-phosphate: step 2/3. Its pathway is bacterial outer membrane biogenesis; lipopolysaccharide biosynthesis. The protein is 2-dehydro-3-deoxyphosphooctonate aldolase of Xylella fastidiosa (strain M23).